Here is a 410-residue protein sequence, read N- to C-terminus: MPYSTNKELILGIMVGTAGISLLLLWYHKVRKPGIAMKLPEFLSLGNTFNSITLQDEIHDDQGTTVIFQERQLQILEKLNELLTNMEELKEEIRFLKEAIPKLEEYIQDELGGKITVHKISPQHRARKRRLPTIQSSATSNSSEEAESEGGYITANTDTEEQSFPVPKAFNTRVEELNLDVLLQKVDHLRMSESGKSESFELLRDHKEKFRDEIEFMWRFARAYGDMYELSTNTQEKKHYANIGKTLSERAINRAPMNGHCHLWYAVLCGYVSEFEGLQNKINYGHLFKEHLDIAIKLLPEEPFLYYLKGRYCYTVSKLSWIEKKMAATLFGKIPSSTVQEALHNFLKAEELCPGYSNPNYMYLAKCYTDLEENQNALKFCNLALLLPTVTKEDKEAQKEMQKIMTSLKR.

Residues 9–28 form a helical membrane-spanning segment; that stretch reads LILGIMVGTAGISLLLLWYH. Position 51 is a phosphoserine (S51). Residues 68–110 adopt a coiled-coil conformation; the sequence is FQERQLQILEKLNELLTNMEELKEEIRFLKEAIPKLEEYIQDE. The residue at position 121 (S121) is a Phosphoserine. Basic residues predominate over residues 122-131; the sequence is PQHRARKRRL. Residues 122–164 form a disordered region; it reads PQHRARKRRLPTIQSSATSNSSEEAESEGGYITANTDTEEQSF. A Phosphothreonine modification is found at T139. Y152 is subject to Phosphotyrosine. Phosphothreonine is present on residues T154 and T157.

Belongs to the RMDN family. Interacts with microtubules.

The protein localises to the membrane. It is found in the cytoplasm. Its subcellular location is the cytoskeleton. It localises to the spindle. The protein resides in the spindle pole. The chain is Regulator of microtubule dynamics protein 2 (RMDN2) from Homo sapiens (Human).